We begin with the raw amino-acid sequence, 354 residues long: Protein RecA (354 aa).

ATP is bound at residue 67 to 74 (GPESSGKT).

This sequence belongs to the RecA family.

It localises to the cytoplasm. Can catalyze the hydrolysis of ATP in the presence of single-stranded DNA, the ATP-dependent uptake of single-stranded DNA by duplex DNA, and the ATP-dependent hybridization of homologous single-stranded DNAs. It interacts with LexA causing its activation and leading to its autocatalytic cleavage. This chain is Protein RecA, found in Pasteurella multocida (strain Pm70).